The chain runs to 125 residues: Small ribosomal subunit protein uS12c (125 aa).

Positions 1-23 (MPTLEHLTRSPRKKIKRKTKSPA) are disordered. The span at 9–20 (RSPRKKIKRKTK) shows a compositional bias: basic residues.

The protein belongs to the universal ribosomal protein uS12 family. Part of the 30S ribosomal subunit.

It is found in the plastid. The protein resides in the chloroplast. With S4 and S5 plays an important role in translational accuracy. Located at the interface of the 30S and 50S subunits. The protein is Small ribosomal subunit protein uS12c (rps12) of Euglena gracilis.